A 45-amino-acid chain; its full sequence is Large ribosomal subunit protein bL34 (45 aa).

It belongs to the bacterial ribosomal protein bL34 family.

The polypeptide is Large ribosomal subunit protein bL34 (Arthrobacter sp. (strain FB24)).